We begin with the raw amino-acid sequence, 97 residues long: Large ribosomal subunit protein bL27 (97 aa).

The segment at 1–21 is disordered; sequence MAHKKGVGSSRNGRDSNPKYR.

Belongs to the bacterial ribosomal protein bL27 family.

The sequence is that of Large ribosomal subunit protein bL27 from Gemmatimonas aurantiaca (strain DSM 14586 / JCM 11422 / NBRC 100505 / T-27).